The primary structure comprises 709 residues: DNA ligase (709 aa).

The interval 1 to 20 (MTATHRGAQADASAPAGPLP) is disordered. NAD(+) is bound by residues 52–56 (DAEYD), 101–102 (SL), and E146. K148 functions as the N6-AMP-lysine intermediate in the catalytic mechanism. R169, E205, K322, and K346 together coordinate NAD(+). Zn(2+) contacts are provided by C440, C443, C458, and C464. The BRCT domain occupies 623–709 (KAPAPLSGKT…AEAGAAPAQE (87 aa)).

Belongs to the NAD-dependent DNA ligase family. LigA subfamily. Mg(2+) is required as a cofactor. It depends on Mn(2+) as a cofactor.

The enzyme catalyses NAD(+) + (deoxyribonucleotide)n-3'-hydroxyl + 5'-phospho-(deoxyribonucleotide)m = (deoxyribonucleotide)n+m + AMP + beta-nicotinamide D-nucleotide.. Functionally, DNA ligase that catalyzes the formation of phosphodiester linkages between 5'-phosphoryl and 3'-hydroxyl groups in double-stranded DNA using NAD as a coenzyme and as the energy source for the reaction. It is essential for DNA replication and repair of damaged DNA. This is DNA ligase from Cupriavidus necator (strain ATCC 17699 / DSM 428 / KCTC 22496 / NCIMB 10442 / H16 / Stanier 337) (Ralstonia eutropha).